The chain runs to 420 residues: MASAGAGLSKRGASNVDAIMPGIRAALLERTRPTVPRIDLSTAENWLLRNEVIELTKDAIRDGLKPHHLSYPNEFAGDADLIKALAAFVNEYFHPHIPVEPDHIATAPGAATCLNTFLYNLCEPGEGILVPAPFWNGFDWLFTARSSAVPVMVHVERSADTLTAKLIPALEKAYEESKIPIRGLLLTNPQNPYGQCYPRSVMEDCIRFCHSKGIHYISDEVYALSNFENPELPDAPPFVSALQIDVKGIGCDLSRVHTFWSTSKDFGSSGFRVGCSITQANEAMHVALALASNTESSSLSAVASTALLTSPRLPELLQLNAQRLQEAYCLMTNFLKKHQIEYIPANSAPFLFARVAPQAQTWEDEKAVIAQLKEAGVNVSGGKAYHVNEDQKGWARLTFALETSRAEEAIKRMETVLGKQ.

K264 is modified (N6-(pyridoxal phosphate)lysine).

Belongs to the class-I pyridoxal-phosphate-dependent aminotransferase family. It depends on pyridoxal 5'-phosphate as a cofactor.

It functions in the pathway mycotoxin biosynthesis. Probable aminotransferase; part of the gene cluster that mediates the biosynthesis of aspirochlorine (or antibiotic A30641), an unusual halogenated spiro compound with distinctive antifungal properties due to selective inhibition of protein biosynthesis, and which is also active against bacteria, viruses, and murine tumor cells. The non-ribosomal peptide synthetase (NRPS) aclP is responsible the formation of the diketopiperazine (DKP) core from the condensation of 2 phenylalanine residues. One Phe residue is tailored into chlorotyrosine by hydroxylation and chlorination, whereas the second Phe undergoes an unprecedented C-C bond cleavage to be converted into glycine. After formation of the DKP, sulfur is incorporated into the DKP by conjugation with glutathione by aclG, followed by its stepwise degradation to the thiol by aclI, aclJ and aclK, and the dithiol oxidation by aclT. In addition, oxygenases (aclB, aclC, aclL and aclO) and O-methyltransferases (aclM and aclU) act as tailoring enzymes to produce the intermediate dechloroaspirochlorine. Ultimately, chlorination of dechloroaspirochlorine by the halogenase aclH is the last step in the aspirochlorine pathway. This is Probable aminotransferase aclI from Aspergillus oryzae (strain ATCC 42149 / RIB 40) (Yellow koji mold).